A 180-amino-acid chain; its full sequence is Adenine phosphoribosyltransferase (180 aa).

Ser2 carries the N-acetylserine modification. Phosphoserine occurs at positions 4, 15, and 30. Residue Tyr60 is modified to Phosphotyrosine. Ser66 bears the Phosphoserine mark. Residue Lys114 is modified to N6-acetyllysine. Thr135 is subject to Phosphothreonine.

Belongs to the purine/pyrimidine phosphoribosyltransferase family. In terms of assembly, homodimer.

It localises to the cytoplasm. It catalyses the reaction AMP + diphosphate = 5-phospho-alpha-D-ribose 1-diphosphate + adenine. Its pathway is purine metabolism; AMP biosynthesis via salvage pathway; AMP from adenine: step 1/1. Functionally, catalyzes a salvage reaction resulting in the formation of AMP, that is energically less costly than de novo synthesis. This is Adenine phosphoribosyltransferase from Rattus norvegicus (Rat).